The following is a 121-amino-acid chain: Ribonuclease P protein component (121 aa).

The protein belongs to the RnpA family. Consists of a catalytic RNA component (M1 or rnpB) and a protein subunit.

The enzyme catalyses Endonucleolytic cleavage of RNA, removing 5'-extranucleotides from tRNA precursor.. Its function is as follows. RNaseP catalyzes the removal of the 5'-leader sequence from pre-tRNA to produce the mature 5'-terminus. It can also cleave other RNA substrates such as 4.5S RNA. The protein component plays an auxiliary but essential role in vivo by binding to the 5'-leader sequence and broadening the substrate specificity of the ribozyme. This Chromobacterium violaceum (strain ATCC 12472 / DSM 30191 / JCM 1249 / CCUG 213 / NBRC 12614 / NCIMB 9131 / NCTC 9757 / MK) protein is Ribonuclease P protein component.